The chain runs to 489 residues: Cytochrome P450 monooxygenase prhB (489 aa).

3 consecutive transmembrane segments (helical) span residues methionine 1–tyrosine 21, valine 212–alanine 232, and leucine 287–leucine 307. Residues asparagine 347 and asparagine 379 are each glycosylated (N-linked (GlcNAc...) asparagine). Residue cysteine 431 coordinates heme.

This sequence belongs to the cytochrome P450 family. The cofactor is heme.

The protein resides in the membrane. It participates in secondary metabolite biosynthesis; terpenoid biosynthesis. In terms of biological role, cytochrome P450 monooxygenase; part of the gene cluster that mediates the biosynthesis of paraherquonin, a meroterpenoid with a unique, highly congested hexacyclic molecular architecture. The first step of the pathway is the synthesis of 3,5-dimethylorsellinic acid (DMOA) by the polyketide synthase prhL. Synthesis of DMOA is followed by farnesylation by the prenyltransferase prhE, methylesterification by the methyl-transferase prhM, epoxidation of the prenyl chain by the flavin-dependent monooxygenase prhF, and cyclization of the farnesyl moiety by the terpene cyclase prhH, to yield the tetracyclic intermediate, protoaustinoid A. The short chain dehydrogenase prhI then oxidizes the C-3 alcohol group of the terpene cyclase product to transform protoaustinoid A into protoaustinoid B. The FAD-binding monooxygenase prhJ catalyzes the oxidation of protoaustinoid B into preaustinoid A which is further oxidized into preaustinoid A1 by FAD-binding monooxygenase phrK. Finally, prhA leads to berkeleydione via the berkeleyone B intermediate. PrhA is a multifunctional dioxygenase that first desaturates at C5-C6 to form berkeleyone B, followed by rearrangement of the A/B-ring to form the cycloheptadiene moiety in berkeleydione. Berkeleydione serves as the key intermediate for the biosynthesis of paraherquonin as well as many other meroterpenoids. The cytochrome P450 monooxygenases prhB, prhD, and prhN, as well as the isomerase prhC, are probably involved in the late stage of paraherquonin biosynthesis, after the production of berkeleydione. Especially prhC might be a multifunctional enzyme that catalyzes the D-ring expansion via intramolecular methoxy rearrangement, as well as the hydrolysis of the expanded D-ring. The chain is Cytochrome P450 monooxygenase prhB from Penicillium brasilianum.